We begin with the raw amino-acid sequence, 254 residues long: MNALLNILLCTLAATALAEISPNIVGGSNAAAGEFPWQGSLQVRSGTSWFHICGCVLYTTSKALTAAHCLSNSASSYRLGFGMLRMNNVDGTEQYSSVTSYTNHPNYNGNAAGYPNDIAVLRLTSSMDTSSSAVGPSVWLLVERLCRTNMYDQRMGKTQWRWQHPNNLQKVDMTVLTNSDCSSRWSGISGATVNSGHICIFESGRSACSGDSGGPLVCGNTLTGITSWGISSCSGSYPSVYTRVSSFYNWVQTQ.

The first 18 residues, 1 to 18 (MNALLNILLCTLAATALA), serve as a signal peptide directing secretion. Residues 19-23 (EISPN) constitute a propeptide, activation peptide. Residues 24-254 (IVGGSNAAAG…SSFYNWVQTQ (231 aa)) enclose the Peptidase S1 domain. A disulfide bond links Cys53 and Cys69. Residues His68 and Asp117 each act as charge relay system in the active site. 3 disulfide bridges follow: Cys146–Cys218, Cys181–Cys199, and Cys208–Cys233. Ser212 acts as the Charge relay system in catalysis.

It belongs to the peptidase S1 family. As to quaternary structure, monomer. Expressed specifically in the distal quarter of the intestine.

It localises to the secreted. The protein localises to the extracellular space. With respect to regulation, activated by an autocatalytic mechanism. Functionally, specificity similar to chymotrypsin. This is Chymotrypsin-like serine proteinase from Haliotis rufescens (California red abalone).